Here is a 241-residue protein sequence, read N- to C-terminus: ATP synthase subunit a (241 aa).

The next 5 helical transmembrane spans lie at 30-50 (GQVF…ISLG), 91-111 (FIGT…LIPW), 128-148 (INTT…AGLS), 193-213 (LVVG…VMFL), and 214-234 (GLFT…YYIG).

Belongs to the ATPase A chain family. In terms of assembly, F-type ATPases have 2 components, CF(1) - the catalytic core - and CF(0) - the membrane proton channel. CF(1) has five subunits: alpha(3), beta(3), gamma(1), delta(1), epsilon(1). CF(0) has four main subunits: a, b, b' and c.

It localises to the cellular thylakoid membrane. Functionally, key component of the proton channel; it plays a direct role in the translocation of protons across the membrane. The sequence is that of ATP synthase subunit a from Prochlorococcus marinus (strain MIT 9312).